Reading from the N-terminus, the 557-residue chain is Dihydroxy-acid dehydratase (557 aa).

Cysteine 49 is a [2Fe-2S] cluster binding site. Mg(2+) is bound at residue aspartate 81. A [2Fe-2S] cluster-binding site is contributed by cysteine 122. 2 residues coordinate Mg(2+): aspartate 123 and lysine 124. At lysine 124 the chain carries N6-carboxylysine. [2Fe-2S] cluster is bound at residue cysteine 194. Residue glutamate 446 coordinates Mg(2+). Catalysis depends on serine 472, which acts as the Proton acceptor.

The protein belongs to the IlvD/Edd family. As to quaternary structure, homodimer. It depends on [2Fe-2S] cluster as a cofactor. Mg(2+) is required as a cofactor.

It catalyses the reaction (2R)-2,3-dihydroxy-3-methylbutanoate = 3-methyl-2-oxobutanoate + H2O. The enzyme catalyses (2R,3R)-2,3-dihydroxy-3-methylpentanoate = (S)-3-methyl-2-oxopentanoate + H2O. Its pathway is amino-acid biosynthesis; L-isoleucine biosynthesis; L-isoleucine from 2-oxobutanoate: step 3/4. It functions in the pathway amino-acid biosynthesis; L-valine biosynthesis; L-valine from pyruvate: step 3/4. Functions in the biosynthesis of branched-chain amino acids. Catalyzes the dehydration of (2R,3R)-2,3-dihydroxy-3-methylpentanoate (2,3-dihydroxy-3-methylvalerate) into 2-oxo-3-methylpentanoate (2-oxo-3-methylvalerate) and of (2R)-2,3-dihydroxy-3-methylbutanoate (2,3-dihydroxyisovalerate) into 2-oxo-3-methylbutanoate (2-oxoisovalerate), the penultimate precursor to L-isoleucine and L-valine, respectively. The protein is Dihydroxy-acid dehydratase of Prochlorococcus marinus (strain AS9601).